Here is a 519-residue protein sequence, read N- to C-terminus: Glucose-1-phosphate adenylyltransferase large subunit 3, chloroplastic/amyloplastic (519 aa).

The transit peptide at 1–74 (MQFSSVFPLE…DAGPDTLHVR (74 aa)) directs the protein to the chloroplast.

This sequence belongs to the bacterial/plant glucose-1-phosphate adenylyltransferase family. Heterotetramer composed of two small and two large subunits. In terms of tissue distribution, expressed in stems.

It is found in the plastid. Its subcellular location is the chloroplast. The enzyme catalyses alpha-D-glucose 1-phosphate + ATP + H(+) = ADP-alpha-D-glucose + diphosphate. The protein operates within glycan biosynthesis; starch biosynthesis. With respect to regulation, activated by 3'phosphoglycerate, inhibited by orthophosphate. Allosteric regulation. Functionally, involved in synthesis of starch. Catalyzes the synthesis of ADP-glucose, a molecule that serves as an activated glycosyl donor for alpha-1,4-glucan synthesis. Essential for starch synthesis in leaf chloroplasts. The protein is Glucose-1-phosphate adenylyltransferase large subunit 3, chloroplastic/amyloplastic of Oryza sativa subsp. japonica (Rice).